The sequence spans 678 residues: DNA ligase (678 aa).

NAD(+) is bound by residues 36–40, 85–86, and Glu-117; these read DAEYD and SL. Catalysis depends on Lys-119, which acts as the N6-AMP-lysine intermediate. 4 residues coordinate NAD(+): Arg-140, Glu-177, Lys-294, and Lys-318. Zn(2+) is bound by residues Cys-412, Cys-415, Cys-430, and Cys-436. Positions 595–678 constitute a BRCT domain; it reads ADEQPLNGQT…NLLREHGIEV (84 aa).

The protein belongs to the NAD-dependent DNA ligase family. LigA subfamily. It depends on Mg(2+) as a cofactor. The cofactor is Mn(2+).

It catalyses the reaction NAD(+) + (deoxyribonucleotide)n-3'-hydroxyl + 5'-phospho-(deoxyribonucleotide)m = (deoxyribonucleotide)n+m + AMP + beta-nicotinamide D-nucleotide.. DNA ligase that catalyzes the formation of phosphodiester linkages between 5'-phosphoryl and 3'-hydroxyl groups in double-stranded DNA using NAD as a coenzyme and as the energy source for the reaction. It is essential for DNA replication and repair of damaged DNA. In Marinobacter nauticus (strain ATCC 700491 / DSM 11845 / VT8) (Marinobacter aquaeolei), this protein is DNA ligase.